We begin with the raw amino-acid sequence, 136 residues long: Large ribosomal subunit protein uL22 (136 aa).

Belongs to the universal ribosomal protein uL22 family. In terms of assembly, part of the 50S ribosomal subunit.

In terms of biological role, this protein binds specifically to 23S rRNA; its binding is stimulated by other ribosomal proteins, e.g. L4, L17, and L20. It is important during the early stages of 50S assembly. It makes multiple contacts with different domains of the 23S rRNA in the assembled 50S subunit and ribosome. Functionally, the globular domain of the protein is located near the polypeptide exit tunnel on the outside of the subunit, while an extended beta-hairpin is found that lines the wall of the exit tunnel in the center of the 70S ribosome. The polypeptide is Large ribosomal subunit protein uL22 (Bacteroides thetaiotaomicron (strain ATCC 29148 / DSM 2079 / JCM 5827 / CCUG 10774 / NCTC 10582 / VPI-5482 / E50)).